We begin with the raw amino-acid sequence, 29 residues long: Ceratotoxin-B (29 aa).

As to quaternary structure, homomer of four to six subunits.

It localises to the secreted. Female-specific peptides with potent activity against Gram-positive and Gram-negative bacteria. They have as well hemolytic activity. This Ceratitis capitata (Mediterranean fruit fly) protein is Ceratotoxin-B (CTXB).